Reading from the N-terminus, the 412-residue chain is Isovaleryl-CoA dehydrogenase, mitochondrial (412 aa).

The transit peptide at 1–25 directs the protein to the mitochondrion; it reads MHKLFVARSVKSALFRIKNHQKPQF. Residues 154-163 and 187-189 contribute to the FAD site; these read LAMSEPNAGS and WCT. A substrate-binding site is contributed by serine 163. Residues 209–210, tyrosine 264, and 271–274 contribute to the substrate site; these read SK and DLER. Catalysis depends on glutamate 273, which acts as the Proton acceptor. Residues arginine 299, glutamine 310, and 367–371 contribute to the FAD site; that span reads QCLGG. 394–395 serves as a coordination point for substrate; the sequence is AG. FAD is bound at residue 396–398; the sequence is TSE.

Belongs to the acyl-CoA dehydrogenase family. Homotetramer. It depends on FAD as a cofactor. Expressed in flowers and tubers.

The protein resides in the mitochondrion. The enzyme catalyses 3-methylbutanoyl-CoA + oxidized [electron-transfer flavoprotein] + H(+) = 3-methylbut-2-enoyl-CoA + reduced [electron-transfer flavoprotein]. Its pathway is amino-acid degradation; L-leucine degradation; (S)-3-hydroxy-3-methylglutaryl-CoA from 3-isovaleryl-CoA: step 1/3. In terms of biological role, involved in the catabolism of amino acids. Uses isovaleryl-CoA as substrate. Minor activity detected with 2-methylpalmitoyl-CoA or 2-methylbutanoyl-CoA, but no activity with short- and medium-straight chain acyl-CoA esters or with 2-methylhexanoyl-CoA. The chain is Isovaleryl-CoA dehydrogenase, mitochondrial (IVD) from Solanum tuberosum (Potato).